The chain runs to 183 residues: Putative manganese efflux pump MntP (183 aa).

The next 6 helical transmembrane spans lie at 8 to 28 (MIAL…VALG), 39 to 59 (IFYI…VGMA), 68 to 88 (FGSI…GQMI), 108 to 128 (LFFA…LGIF), 133 to 153 (MATI…GLLV), and 162 to 182 (GSYS…KLLF).

The protein belongs to the MntP (TC 9.B.29) family.

Its subcellular location is the cell membrane. Functionally, probably functions as a manganese efflux pump. In Geobacillus thermodenitrificans (strain NG80-2), this protein is Putative manganese efflux pump MntP.